Consider the following 81-residue polypeptide: Large ribosomal subunit protein bL31B (81 aa).

The protein belongs to the bacterial ribosomal protein bL31 family. Type B subfamily. Part of the 50S ribosomal subunit.

The sequence is that of Large ribosomal subunit protein bL31B from Exiguobacterium sibiricum (strain DSM 17290 / CCUG 55495 / CIP 109462 / JCM 13490 / 255-15).